The sequence spans 62 residues: Large ribosomal subunit protein uL30 (62 aa).

The protein belongs to the universal ribosomal protein uL30 family. In terms of assembly, part of the 50S ribosomal subunit.

This Cereibacter sphaeroides (strain ATCC 17029 / ATH 2.4.9) (Rhodobacter sphaeroides) protein is Large ribosomal subunit protein uL30.